The primary structure comprises 261 residues: Phosphatidylglycerol--prolipoprotein diacylglyceryl transferase (261 aa).

4 helical membrane passes run 12–32 (ISIR…VYLA), 41–61 (IIPD…IVGA), 87–107 (GIAG…LYFF), and 112–132 (LIHP…AQSI). An a 1,2-diacyl-sn-glycero-3-phospho-(1'-sn-glycerol)-binding site is contributed by arginine 134. 3 helical membrane passes run 170 to 190 (QPTF…IIVL), 200 to 220 (GEIA…IEGM), and 229 to 249 (GLRV…GIII).

Belongs to the Lgt family.

It is found in the cell membrane. The catalysed reaction is L-cysteinyl-[prolipoprotein] + a 1,2-diacyl-sn-glycero-3-phospho-(1'-sn-glycerol) = an S-1,2-diacyl-sn-glyceryl-L-cysteinyl-[prolipoprotein] + sn-glycerol 1-phosphate + H(+). Its pathway is protein modification; lipoprotein biosynthesis (diacylglyceryl transfer). Functionally, catalyzes the transfer of the diacylglyceryl group from phosphatidylglycerol to the sulfhydryl group of the N-terminal cysteine of a prolipoprotein, the first step in the formation of mature lipoproteins. This is Phosphatidylglycerol--prolipoprotein diacylglyceryl transferase from Streptococcus sanguinis (strain SK36).